We begin with the raw amino-acid sequence, 877 residues long: Alanine--tRNA ligase (877 aa).

The Zn(2+) site is built by H567, H571, C669, and H673.

The protein belongs to the class-II aminoacyl-tRNA synthetase family. Zn(2+) serves as cofactor.

Its subcellular location is the cytoplasm. The enzyme catalyses tRNA(Ala) + L-alanine + ATP = L-alanyl-tRNA(Ala) + AMP + diphosphate. In terms of biological role, catalyzes the attachment of alanine to tRNA(Ala) in a two-step reaction: alanine is first activated by ATP to form Ala-AMP and then transferred to the acceptor end of tRNA(Ala). Also edits incorrectly charged Ser-tRNA(Ala) and Gly-tRNA(Ala) via its editing domain. The sequence is that of Alanine--tRNA ligase from Rickettsia rickettsii (strain Iowa).